A 563-amino-acid polypeptide reads, in one-letter code: Arginine--tRNA ligase (563 aa).

The 'HIGH' region signature appears at 121-131; that stretch reads PNIAKPFSIGH.

This sequence belongs to the class-I aminoacyl-tRNA synthetase family. Monomer.

It is found in the cytoplasm. The catalysed reaction is tRNA(Arg) + L-arginine + ATP = L-arginyl-tRNA(Arg) + AMP + diphosphate. The sequence is that of Arginine--tRNA ligase from Streptococcus pyogenes serotype M18 (strain MGAS8232).